The sequence spans 182 residues: Crossover junction endodeoxyribonuclease RuvC (182 aa).

Catalysis depends on residues aspartate 7, glutamate 69, and aspartate 141. Aspartate 7, glutamate 69, and aspartate 141 together coordinate Mg(2+).

This sequence belongs to the RuvC family. As to quaternary structure, homodimer which binds Holliday junction (HJ) DNA. The HJ becomes 2-fold symmetrical on binding to RuvC with unstacked arms; it has a different conformation from HJ DNA in complex with RuvA. In the full resolvosome a probable DNA-RuvA(4)-RuvB(12)-RuvC(2) complex forms which resolves the HJ. It depends on Mg(2+) as a cofactor.

It is found in the cytoplasm. It carries out the reaction Endonucleolytic cleavage at a junction such as a reciprocal single-stranded crossover between two homologous DNA duplexes (Holliday junction).. Its function is as follows. The RuvA-RuvB-RuvC complex processes Holliday junction (HJ) DNA during genetic recombination and DNA repair. Endonuclease that resolves HJ intermediates. Cleaves cruciform DNA by making single-stranded nicks across the HJ at symmetrical positions within the homologous arms, yielding a 5'-phosphate and a 3'-hydroxyl group; requires a central core of homology in the junction. The consensus cleavage sequence is 5'-(A/T)TT(C/G)-3'. Cleavage occurs on the 3'-side of the TT dinucleotide at the point of strand exchange. HJ branch migration catalyzed by RuvA-RuvB allows RuvC to scan DNA until it finds its consensus sequence, where it cleaves and resolves the cruciform DNA. The chain is Crossover junction endodeoxyribonuclease RuvC from Delftia acidovorans (strain DSM 14801 / SPH-1).